A 62-amino-acid chain; its full sequence is Large ribosomal subunit protein bL28 (62 aa).

The tract at residues 1-23 (MARRCFVTGKSAKAGNARSHSMR) is disordered.

The protein belongs to the bacterial ribosomal protein bL28 family.

The polypeptide is Large ribosomal subunit protein bL28 (Brevibacillus brevis (strain 47 / JCM 6285 / NBRC 100599)).